The primary structure comprises 336 residues: D-alanine--D-alanine ligase (336 aa).

The ATP-grasp domain occupies 124-330; the sequence is KMWFSALGIP…FTEYLSLVIN (207 aa). An ATP-binding site is contributed by 154–209; it reads ALENWGSIFVKAASQGSSVGCYKVDDSSKVADVLKDAFGYAPYVIVEKTIKARELE. Aspartate 284, glutamate 297, and asparagine 299 together coordinate Mg(2+).

The protein belongs to the D-alanine--D-alanine ligase family. Requires Mg(2+) as cofactor. Mn(2+) is required as a cofactor.

The protein localises to the cytoplasm. The enzyme catalyses 2 D-alanine + ATP = D-alanyl-D-alanine + ADP + phosphate + H(+). The protein operates within cell wall biogenesis; peptidoglycan biosynthesis. Its function is as follows. Cell wall formation. The protein is D-alanine--D-alanine ligase of Shewanella sp. (strain ANA-3).